The chain runs to 458 residues: UDP-N-acetylglucosamine 1-carboxyvinyltransferase (458 aa).

22–23 contributes to the phosphoenolpyruvate binding site; sequence KN. Residue Arg-94 coordinates UDP-N-acetyl-alpha-D-glucosamine. Asp-119 (proton donor) is an active-site residue. The UDP-N-acetyl-alpha-D-glucosamine site is built by Asp-309 and Val-331.

Belongs to the EPSP synthase family. MurA subfamily.

The protein localises to the cytoplasm. The catalysed reaction is phosphoenolpyruvate + UDP-N-acetyl-alpha-D-glucosamine = UDP-N-acetyl-3-O-(1-carboxyvinyl)-alpha-D-glucosamine + phosphate. The protein operates within cell wall biogenesis; peptidoglycan biosynthesis. Functionally, cell wall formation. Adds enolpyruvyl to UDP-N-acetylglucosamine. This Chlamydia pneumoniae (Chlamydophila pneumoniae) protein is UDP-N-acetylglucosamine 1-carboxyvinyltransferase.